Reading from the N-terminus, the 322-residue chain is MIFSTLEHILTHISFSIVSIVITLHLITLLGNEIIKPYDSSEKGMIATFLCLTGLLTTRWIYSGHFPLSDLYESLIFLSWSFSLIHIVPYFKIRKNDLTTITASITIFTQGFATSGLLNEIHKPTILVPALQSEWLIMHVSMMILSYAALLCGSLLSVALLVITFRNIFYSSKSNNLLKLNESFSFGEIQYKNERNNIFQKTSFFSDKNYYKAQFIQQLDYWSYRVISLGFIFLTIGILSGAVWANEAWGSYWSWDPKETWAFITWIVFAIYLHTRTNKNLQGANSAIVATLGFLIIWICYFGVNLLGIGLHSYGSFTLTYS.

8 helical membrane-spanning segments follow: residues 9–29 (ILTH…LITL), 44–64 (GMIA…IYSG), 71–91 (LYES…VPYF), 98–118 (LTTI…SGLL), 143–163 (MILS…LLVI), 226–246 (VISL…VWAN), 253–273 (WSWD…AIYL), and 287–307 (AIVA…VNLL).

This sequence belongs to the CcmF/CycK/Ccl1/NrfE/CcsA family. In terms of assembly, may interact with Ccs1.

It is found in the plastid. Its subcellular location is the chloroplast thylakoid membrane. Required during biogenesis of c-type cytochromes (cytochrome c6 and cytochrome f) at the step of heme attachment. This is Cytochrome c biogenesis protein CcsA from Helianthus annuus (Common sunflower).